Here is a 580-residue protein sequence, read N- to C-terminus: Type 3 secretion system translocon protein SctE (580 aa).

IpgC chaperone binding domain stretches follow at residues 15 to 45 and 51 to 72; these read KILT…IADL and INTT…APKS. The tract at residues 61–70 is mediates interaction with human MAD2L2; it reads NILIPELKAP. Positions 104-224 form a coiled coil; it reads AWKSQQQARQ…MQLEKEIDSF (121 aa). Transmembrane regions (helical) follow at residues 313-333 and 399-419; these read ILGA…GGAS and IGSI…VVLV.

Belongs to the SctE/SipB/YopB family. In terms of assembly, the core secretion machinery of the T3SS is composed of approximately 20 different proteins, including cytoplasmic components, a base, an export apparatus and a needle. This subunit is involved in the formation of a pore, called the translocon, in host membrane. Interacts with IpaC/SctB. Interacts with the needle tip protein IpaD/SctA. Interacts with the molecular chaperone IpgC, which prevents premature association with IpaC/SctB within the cytoplasm of Shigella cells and protects IpaB/SctE from proteolysis. Interacts with the host protein ICE in the cytoplasm of infected macrophages. Interacts with human MAD2L2 in the G2/M phase of the cell cycle.

Its subcellular location is the secreted. The protein localises to the host membrane. The protein resides in the host cell. It localises to the host nucleus. With respect to regulation, interaction with the membrane is affected by the pH. IpaB/SctE is more efficient in destabilizing the membrane at pH 5.0 than at neutral pH. In terms of biological role, component of the type III secretion system (T3SS), also called injectisome, which is used to inject bacterial effector proteins into eukaryotic host cells. IpaB/SctE and IpaC/SctB are inserted into the host membrane where they form a pore and allow the translocation of effector proteins into the cytosol of target cells. Interaction with IpaD/SctA at needle tips leads to the formation of the MxiH/SctF-IpaD/SctA-IpaB/SctE ternary complex, which is essential for host cell sensing. Interaction of IpaB/SctE with host membrane lipids promotes recruitment of IpaC/SctB at the needle tip concomitant with translocon insertion into the host membrane and type III secretion induction. Functionally, required for efficient dissemination. Necessary for lysis of the two cellular membranes that surround bacteria in protrusions during cell-to-cell spread. Is sufficient to induce macrophage apoptosis through activation of the interleukin-1 beta converting enzyme (ICE) in infected macrophages. In epithelial cells, causes cell-cycle arrest by targeting host MAD2L2, an anaphase-promoting complex/cyclosome (APC) inhibitor. The polypeptide is Type 3 secretion system translocon protein SctE (Shigella flexneri).